A 550-amino-acid polypeptide reads, in one-letter code: Metal transporter Nramp4 (550 aa).

Basic and acidic residues predominate over residues 1–13 (MEEGAKIGREHEQ). A disordered region spans residues 1–37 (MEEGAKIGREHEQQQQQHGRVNGSGRVAAVGGGSGGG). Over residues 14–29 (QQQQHGRVNGSGRVAA) the composition is skewed to low complexity. Helical transmembrane passes span 72-92 (FLAH…PSNL), 105-125 (SLLW…SLAA), 151-171 (LWLL…LGTA), 177-197 (LLHI…FLIL), 207-227 (MEFT…MELG), 255-275 (VAMF…SLVL), 292-312 (FFLL…VAIV), 354-374 (VYGV…SYAG), 388-408 (IIYL…CSIG), 416-436 (IINI…IPLI), 457-477 (IAWI…CTSF), and 492-512 (AIIS…LIYL).

Belongs to the NRAMP (TC 2.A.55) family.

The protein resides in the membrane. In terms of biological role, probable metal transporter. The protein is Metal transporter Nramp4 (NRAMP4) of Oryza sativa subsp. japonica (Rice).